Consider the following 898-residue polypeptide: Serine/threonine-protein kinase TAO3 (898 aa).

In terms of domain architecture, Protein kinase spans 24-277; the sequence is FVGLHEIGHG…SADLLRHDFV (254 aa). Residues 30–38 and Lys-53 each bind ATP; that span reads IGHGSFGAV. Asp-147 acts as the Proton acceptor in catalysis. Positions 316-374 are disordered; the sequence is TRNGPLTESQEEEEDSEHGSNLSRKMDSLGSNHSIPSMSVSTGSQSSSVSSMQEVLDES. Polar residues predominate over residues 334–351; that stretch reads GSNLSRKMDSLGSNHSIP. Residues 352–368 are compositionally biased toward low complexity; it reads SMSVSTGSQSSSVSSMQ. Coiled-coil stretches lie at residues 452 to 502, 548 to 649, and 754 to 875; these read EQEN…THAN, FLES…HAML, and LKSL…IETF. Residues 565-596 are disordered; sequence EEMNEDHSTPKKEKQERISKHKENLQHTQAEE.

This sequence belongs to the protein kinase superfamily. STE Ser/Thr protein kinase family. STE20 subfamily.

It is found in the cytoplasm. The protein localises to the cell membrane. It localises to the membrane raft. Its subcellular location is the lipid droplet. The enzyme catalyses L-seryl-[protein] + ATP = O-phospho-L-seryl-[protein] + ADP + H(+). The catalysed reaction is L-threonyl-[protein] + ATP = O-phospho-L-threonyl-[protein] + ADP + H(+). In terms of biological role, serine/threonine-protein kinase that acts as a regulator of the p38/MAPK14 stress-activated MAPK cascade and of the MAPK8/JNK cascade. In response to DNA damage, involved in the G2/M transition DNA damage checkpoint by activating the p38/MAPK14 stress-activated MAPK cascade, probably by mediating phosphorylation of upstream MAP kinase kinases. Inhibits basal activity of the MAPK8/JNK cascade. This chain is Serine/threonine-protein kinase TAO3 (TAOK3), found in Gallus gallus (Chicken).